The sequence spans 376 residues: MPTNNTPFLTIFLLFLGLLRFDSFPGLEAATGKLASIPGLYVFGDSLVDAGNNNYLPISISKANYPHNGVDFPNKKPTGRFCNGKNAADAIAEKFGLPLPPPYLSLRGLLKREKRKSAAVTGVNFASGGAGIFNSSDQKLGQAIPLSKQVNNWLSIHEEVMKLEPSAAQLHLSKSLFTVVIGSNDLFDYFGSFKLRRQSNPQQYTQLMADKLKEQLKRIHDSGARRFLIIGVAQIGCTPGKRAKNSTLHECDEGANMWCSLYNEALVKMLQQLKQELQGSITYTYFDNYKSLHDIISNPARYGFADVTSACCGNGELNADLPCLPLAKLCSDRTKHLFWDRYGHPTEAAARTIVDLMLTDDTHYSSPITLTQLVST.

The N-terminal stretch at 1–29 (MPTNNTPFLTIFLLFLGLLRFDSFPGLEA) is a signal peptide. S46 (nucleophile) is an active-site residue. Residues N134 and N245 are each glycosylated (N-linked (GlcNAc...) asparagine). Residues D340 and H344 contribute to the active site.

The protein belongs to the 'GDSL' lipolytic enzyme family.

The protein resides in the secreted. This chain is GDSL esterase/lipase At5g55050, found in Arabidopsis thaliana (Mouse-ear cress).